Consider the following 103-residue polypeptide: Large ribosomal subunit protein bL21 (103 aa).

The protein belongs to the bacterial ribosomal protein bL21 family. In terms of assembly, part of the 50S ribosomal subunit. Contacts protein L20.

Its function is as follows. This protein binds to 23S rRNA in the presence of protein L20. This Acidovorax ebreus (strain TPSY) (Diaphorobacter sp. (strain TPSY)) protein is Large ribosomal subunit protein bL21.